Consider the following 1038-residue polypeptide: Ribosome quality control complex subunit 2 (1038 aa).

The stretch at 350-383 (ALRIQNQESQAQKKIDDARAENDRKIQALLDVQE) forms a coiled coil. Disordered regions lie at residues 459–499 (LNTS…MKRK), 708–824 (KTSG…DEPG), and 877–898 (QRKK…KREK). Positions 713–768 (EDNGDDDEEEEEEEEEEEEEEEEEEEEEEEEKEEEEKEEEQQQDEDDSNEVNGLEK) form a coiled coil. Acidic residues predominate over residues 714–761 (DNGDDDEEEEEEEEEEEEEEEEEEEEEEEEKEEEEKEEEQQQDEDDSN). The segment covering 780–794 (SFEHDNLEKDIEKHC) has biased composition (basic and acidic residues). The segment covering 795–805 (TISSDTDSDSG) has biased composition (polar residues). S797 is subject to Phosphoserine. A coiled-coil region spans residues 830-912 (IENINSNVRG…QALKFTKKEK (83 aa)). A compositionally biased stretch (basic and acidic residues) spans 877–894 (QRKKEEIMKREVREDRKN).

It belongs to the NEMF family. As to quaternary structure, component of the ribosome quality control complex (RQC), composed of the E3 ubiquitin ligase RKR1/LTN1, RQC1 and RQC2, as well as CDC48 and its ubiquitin-binding cofactors associated with the 60S ribosomal subunit. RQC2 binds to the 40S-binding surface of tRNAs.

The protein localises to the cytoplasm. In terms of biological role, key component of the ribosome quality control complex (RQC), a ribosome-associated complex that mediates the extraction of incompletely synthesized nascent chains from stalled ribosomes as well as their ubiquitin-mediated proteasomal degradation. Thereby, frees 60S subunit ribosomes from the stalled translation complex and prevents the accumulation of nascent polypeptide chains that are potentially toxic for the cell. Within the RQC complex, RQC2 specifically binds stalled 60S ribosomal subunits by recognizing an exposed, nascent chain-conjugated tRNA moiety and promotes the recruitment of RKR1/LTN1 to stalled 60S subunits. Following binding to stalled 60S ribosomal subunits, RQC2 mediates CAT tailing by recruiting alanine- and threonine-charged tRNA to the A-site and directing the elongation of stalled nascent chains independently of mRNA or 40S subunits, leading to non-templated C-terminal Ala and Thr extensions (CAT tails). CAT tails promote the RKR1/LTN1-mediated ubiquitination of incompletely synthesized nascent polypeptides: CAT tailing facilitates RKR1/LTN1-dependent ubiquitination by exposing lysine residues that would otherwise remain buried in the ribosomal exit tunnel. Following ubiquitination, incompletely synthesized nascent polypeptides are recognized by CDC48 and degraded by the proteasome. CAT-tailed proteins tend to aggregate and sequester chaperones and can induce proteotoxic stress; their RKR1/LTN1-dependent ubiquitination and degradation is required to prevent proteotoxic stress. The sequence is that of Ribosome quality control complex subunit 2 from Saccharomyces cerevisiae (strain ATCC 204508 / S288c) (Baker's yeast).